A 104-amino-acid polypeptide reads, in one-letter code: MKKIRKGDRVVILSGNDKGRSGEVIKVNPGESKALVRGINMVKRHQRQTQKQEAGIISKEAPIHLSNLAIADPKDGKPTRVGFRMNADGGKVRFAKRSGELIDG.

It belongs to the universal ribosomal protein uL24 family. As to quaternary structure, part of the 50S ribosomal subunit.

Its function is as follows. One of two assembly initiator proteins, it binds directly to the 5'-end of the 23S rRNA, where it nucleates assembly of the 50S subunit. Functionally, one of the proteins that surrounds the polypeptide exit tunnel on the outside of the subunit. The chain is Large ribosomal subunit protein uL24 from Bartonella bacilliformis (strain ATCC 35685 / KC583 / Herrer 020/F12,63).